The primary structure comprises 95 residues: Putative small ubiquitin-related modifier 7 (95 aa).

A Ubiquitin-like domain is found at 13 to 90; the sequence is SHITIKIKSQ…IDAFVDQIAG (78 aa). Glycine 90 is covalently cross-linked (Glycyl lysine isopeptide (Gly-Lys) (interchain with K-? in acceptor proteins)).

It belongs to the ubiquitin family. SUMO subfamily. As to quaternary structure, interacts with SAE2, SCE1, SIZ1 and MMS21 Covalently attached to a number of proteins.

Its subcellular location is the nucleus. The protein resides in the cytoplasm. Functionally, ubiquitin-like protein which can be covalently attached to target lysines as a monomer. Does not seem to be involved in protein degradation and may function as an antagonist of ubiquitin in the degradation process. In Arabidopsis thaliana (Mouse-ear cress), this protein is Putative small ubiquitin-related modifier 7 (SUMO7).